The following is a 125-amino-acid chain: Large ribosomal subunit protein bL12 (125 aa).

This sequence belongs to the bacterial ribosomal protein bL12 family. In terms of assembly, homodimer. Part of the ribosomal stalk of the 50S ribosomal subunit. Forms a multimeric L10(L12)X complex, where L10 forms an elongated spine to which 2 to 4 L12 dimers bind in a sequential fashion. Binds GTP-bound translation factors.

In terms of biological role, forms part of the ribosomal stalk which helps the ribosome interact with GTP-bound translation factors. Is thus essential for accurate translation. This chain is Large ribosomal subunit protein bL12, found in Anaeromyxobacter dehalogenans (strain 2CP-1 / ATCC BAA-258).